Consider the following 130-residue polypeptide: Large ribosomal subunit protein bL19 (130 aa).

It belongs to the bacterial ribosomal protein bL19 family.

Functionally, this protein is located at the 30S-50S ribosomal subunit interface and may play a role in the structure and function of the aminoacyl-tRNA binding site. In Cupriavidus metallidurans (strain ATCC 43123 / DSM 2839 / NBRC 102507 / CH34) (Ralstonia metallidurans), this protein is Large ribosomal subunit protein bL19.